Reading from the N-terminus, the 377-residue chain is Cytochrome b (377 aa).

4 helical membrane-spanning segments follow: residues 34–54 (FGFL…FLSM), 78–100 (WLLR…IHIA), 113–133 (TWMT…LGYV), and 179–199 (FFTL…IHLL). 2 residues coordinate heme b: His84 and His98. Heme b is bound by residues His183 and His197. His202 is a binding site for a ubiquinone. Transmembrane regions (helical) follow at residues 225-245 (FTIK…ILVL), 288-308 (KLGG…LPLY), 323-343 (MLFW…AQAI), and 352-372 (QILT…SVLW).

Belongs to the cytochrome b family. As to quaternary structure, the main subunits of complex b-c1 are: cytochrome b, cytochrome c1 and the Rieske protein. Heme b serves as cofactor.

The protein localises to the mitochondrion inner membrane. In terms of biological role, component of the ubiquinol-cytochrome c reductase complex (complex III or cytochrome b-c1 complex) that is part of the mitochondrial respiratory chain. The b-c1 complex mediates electron transfer from ubiquinol to cytochrome c. Contributes to the generation of a proton gradient across the mitochondrial membrane that is then used for ATP synthesis. This Priapulus caudatus (Priapulid worm) protein is Cytochrome b (mt:Cyt-b).